A 310-amino-acid chain; its full sequence is ADP-L-glycero-D-manno-heptose-6-epimerase (310 aa).

Residues phenylalanine 10–isoleucine 11, aspartate 31–asparagine 32, lysine 38, lysine 53, glutamate 75–serine 79, and asparagine 92 each bind NADP(+). Tyrosine 140 (proton acceptor) is an active-site residue. Lysine 144 contributes to the NADP(+) binding site. Asparagine 169 is a binding site for substrate. NADP(+) is bound by residues valine 170 and lysine 178. Lysine 178 serves as the catalytic Proton acceptor. Substrate-binding positions include serine 180, histidine 187, phenylalanine 201–serine 204, arginine 209, and tyrosine 272.

Belongs to the NAD(P)-dependent epimerase/dehydratase family. HldD subfamily. Homopentamer. Requires NADP(+) as cofactor.

It catalyses the reaction ADP-D-glycero-beta-D-manno-heptose = ADP-L-glycero-beta-D-manno-heptose. It participates in nucleotide-sugar biosynthesis; ADP-L-glycero-beta-D-manno-heptose biosynthesis; ADP-L-glycero-beta-D-manno-heptose from D-glycero-beta-D-manno-heptose 7-phosphate: step 4/4. Catalyzes the interconversion between ADP-D-glycero-beta-D-manno-heptose and ADP-L-glycero-beta-D-manno-heptose via an epimerization at carbon 6 of the heptose. This chain is ADP-L-glycero-D-manno-heptose-6-epimerase, found in Salmonella arizonae (strain ATCC BAA-731 / CDC346-86 / RSK2980).